Here is a 120-residue protein sequence, read N- to C-terminus: uncharacterized protein (120 aa).

This sequence to the N-terminal region of phage HK97/HK620 Gp37/hpaH.

This is an uncharacterized protein from Escherichia coli (strain K12).